Reading from the N-terminus, the 370-residue chain is Protein-tyrosine sulfotransferase 1 (370 aa).

Residues 1-8 (MVGKLKQN) lie on the Cytoplasmic side of the membrane. Residues 9 to 25 (LLLACLVISSVTVFYLG) form a helical; Signal-anchor for type II membrane protein membrane-spanning segment. The Lumenal segment spans residues 26-370 (QHAMECHHRI…KEKPQTEQVE (345 aa)). Asparagine 60 carries N-linked (GlcNAc...) asparagine glycosylation. 79-83 (RSGTT) lines the 3'-phosphoadenylyl sulfate pocket. Cysteine 97 and cysteine 157 are disulfide-bonded. Glutamate 100 acts as the Proton donor/acceptor in catalysis. The segment at 102–106 (RVIPR) is interaction with peptide substrate. 3'-phosphoadenylyl sulfate-binding residues include arginine 184, serine 192, and arginine 196. A disulfide bridge connects residues cysteine 226 and cysteine 234. Tyrosine 239 lines the 3'-phosphoadenylyl sulfate pocket. Asparagine 262 carries N-linked (GlcNAc...) asparagine glycosylation. 3'-phosphoadenylyl sulfate contacts are provided by residues 286-295 (STDQVIKPVN) and lysine 301.

It belongs to the protein sulfotransferase family. In terms of assembly, homodimer. Can also form heterodimers with TPST2. In terms of processing, N-glycosylated. In terms of tissue distribution, ubiquitous. Detected in heart, brain, placenta, lung, liver, skeletal muscle, kidney and pancreas.

The protein localises to the golgi apparatus membrane. The enzyme catalyses L-tyrosyl-[protein] + 3'-phosphoadenylyl sulfate = O-sulfo-L-tyrosine-[protein] + adenosine 3',5'-bisphosphate + H(+). Catalyzes the O-sulfation of tyrosine residues within acidic motifs of polypeptides, using 3'-phosphoadenylyl sulfate (PAPS) as cosubstrate. In Homo sapiens (Human), this protein is Protein-tyrosine sulfotransferase 1 (TPST1).